Here is a 1367-residue protein sequence, read N- to C-terminus: DNA-directed RNA polymerase subunit beta' (1367 aa).

The tract at residues methionine 1–lysine 34 is disordered. Residues lysine 7 to arginine 24 are compositionally biased toward basic residues. Zn(2+)-binding residues include cysteine 250, cysteine 317, cysteine 324, and cysteine 327. The disordered stretch occupies residues serine 1306 to glutamate 1367. The segment covering leucine 1355–glutamate 1367 has biased composition (low complexity).

It belongs to the RNA polymerase beta' chain family. RpoC2 subfamily. As to quaternary structure, in cyanobacteria the RNAP catalytic core is composed of 2 alpha, 1 beta, 1 beta', 1 gamma and 1 omega subunit. When a sigma factor is associated with the core the holoenzyme is formed, which can initiate transcription. Requires Zn(2+) as cofactor.

It carries out the reaction RNA(n) + a ribonucleoside 5'-triphosphate = RNA(n+1) + diphosphate. In terms of biological role, DNA-dependent RNA polymerase catalyzes the transcription of DNA into RNA using the four ribonucleoside triphosphates as substrates. In Prochlorococcus marinus (strain SARG / CCMP1375 / SS120), this protein is DNA-directed RNA polymerase subunit beta'.